An 857-amino-acid chain; its full sequence is RNA-directed RNA polymerase 2a (857 aa).

One can recognise a RdRp catalytic domain in the interval 511–624 (KHCLEIDLSK…FSLLPPVGDP (114 aa)). The tract at residues 782–829 (RRCNDKRRTPTGSYGGGEEAETKISQAESTGTRSQKSQRESAFKSQTV) is disordered. The span at 804–816 (KISQAESTGTRSQ) shows a compositional bias: polar residues.

This sequence belongs to the ssRNA positive-strand viruses RNA-directed RNA polymerase family. In terms of assembly, interacts with replication protein 1a.

It carries out the reaction RNA(n) + a ribonucleoside 5'-triphosphate = RNA(n+1) + diphosphate. In terms of biological role, RNA-dependent RNA polymerase which replicates the viral genome composed of 3 RNA segments, RNA1, RNA2 and RNA3. This is RNA-directed RNA polymerase 2a from Cucumis sativus (Cucumber).